We begin with the raw amino-acid sequence, 76 residues long: Conotoxin ArMKLT2-032 (76 aa).

Residues 1-22 (MKLTCVLIIAVLFLTACQLTTG) form the signal peptide. The propeptide occupies 23–46 (ETYSRGEQKDHALRSTDKNSKLTR). Glutamine 47 is subject to Pyrrolidone carboxylic acid. Disulfide bonds link cysteine 48-cysteine 62, cysteine 55-cysteine 66, and cysteine 61-cysteine 73.

The protein belongs to the conotoxin O1 superfamily. In terms of tissue distribution, expressed by the venom duct.

It is found in the secreted. This chain is Conotoxin ArMKLT2-032, found in Conus arenatus (Sand-dusted cone).